The primary structure comprises 671 residues: Pescadillo homolog (671 aa).

A BRCT domain is found at 317–403 (KVRELFRGLT…LMLPVTGYRI (87 aa)). The stretch at 548-584 (QALRKAQEKSRQTETSEARLQRKMSEVKRQEAATRKM) forms a coiled coil. 2 disordered regions span residues 552-578 (KAQE…KRQE) and 643-671 (RRQR…KWVQ).

This sequence belongs to the pescadillo family.

It is found in the nucleus. The protein resides in the nucleolus. Its subcellular location is the nucleoplasm. Required for maturation of ribosomal RNAs and formation of the large ribosomal subunit. The protein is Pescadillo homolog of Leishmania infantum.